Reading from the N-terminus, the 353-residue chain is UPF0283 membrane protein YcjF (353 aa).

At 1–69 (MTEPLKPRID…LRPKRSLWRK (69 aa)) the chain is on the periplasmic side. A helical membrane pass occupies residues 70–90 (MVMGGLALFGASVVGQGVQWT). The Cytoplasmic portion of the chain corresponds to 91-99 (MNAWQTQDW). A helical transmembrane segment spans residues 100-120 (VALGGCAAGALIIGAGVGSVV). At 121–212 (TEWRRLWRLR…ARREISRSAA (92 aa)) the chain is on the periplasmic side. Residues 213–233 (ESTLMIAVSPLALVDMAFIAW) traverse the membrane as a helical segment. Over 234–353 (RNLRLINRIA…LQKGKTPSEK (120 aa)) the chain is Cytoplasmic.

The protein belongs to the UPF0283 family.

It is found in the cell inner membrane. The chain is UPF0283 membrane protein YcjF (ycjF) from Escherichia coli O157:H7.